Consider the following 714-residue polypeptide: Cyclomaltodextrin glucanotransferase (714 aa).

Residues 1-27 form the signal peptide; it reads MKSRYKRLTSLALSLSMALGISLPAWA. An A1 region spans residues 28-165; that stretch reads SPDTSVDNKV…NIKVVIDFAP (138 aa). The Ca(2+) site is built by aspartate 54, asparagine 59, asparagine 60, glycine 78, and aspartate 80. 127–128 provides a ligand contact to substrate; it reads YW. A Ca(2+)-binding site is contributed by asparagine 166. The segment at 166–229 is b; sequence NHTSPADRDN…NLYDLADINH (64 aa). Substrate is bound at residue histidine 167. Isoleucine 217 provides a ligand contact to Ca(2+). Residue 220 to 223 coordinates substrate; that stretch reads NLYD. Residue aspartate 226 coordinates Ca(2+). The interval 230–434 is A2; it reads NNNAMDAYFK…LRKSNPAIAY (205 aa). Arginine 254 provides a ligand contact to substrate. Aspartate 256 serves as the catalytic Nucleophile. 259–260 contacts substrate; that stretch reads KH. Histidine 260 contributes to the Ca(2+) binding site. Glutamate 285 functions as the Proton donor in the catalytic mechanism. Substrate-binding residues include histidine 355, aspartate 399, and arginine 403. Residues 435–523 form a c region; that stretch reads GTTTERWVNN…GTAVWQYTAP (89 aa). The interval 524–610 is d; the sequence is ETSPAIGNVG…SNTFKSFNVL (87 aa). One can recognise an IPT/TIG domain in the interval 527–607; it reads PAIGNVGPTM…GTASNTFKSF (81 aa). The CBM20 domain occupies 609–714; that stretch reads VLTGDQVTVR…VGTVTVDWQN (106 aa). The interval 611–714 is e; that stretch reads TGDQVTVRFL…VGTVTVDWQN (104 aa).

The protein belongs to the glycosyl hydrolase 13 family. Monomer. The cofactor is Ca(2+).

It localises to the secreted. The catalysed reaction is Cyclizes part of a (1-&gt;4)-alpha-D-glucan chain by formation of a (1-&gt;4)-alpha-D-glucosidic bond.. This chain is Cyclomaltodextrin glucanotransferase (cgtM), found in Paenibacillus macerans (Bacillus macerans).